The sequence spans 335 residues: NADP(+)-dependent glycerol-3-phosphate dehydrogenase (335 aa).

A sn-glycerol 3-phosphate-binding site is contributed by glycine 137. Alanine 141 lines the NADPH pocket. Residues lysine 192, aspartate 250, arginine 259, and asparagine 260 each coordinate sn-glycerol 3-phosphate. Lysine 192 acts as the Proton acceptor in catalysis. Arginine 259 contacts NADPH. Positions 287 and 289 each coordinate NADPH.

It belongs to the NAD-dependent glycerol-3-phosphate dehydrogenase family. As to quaternary structure, homodimer.

The protein localises to the cytoplasm. The enzyme catalyses sn-glycerol 3-phosphate + NADP(+) = dihydroxyacetone phosphate + NADPH + H(+). Functionally, catalyzes the reduction of the glycolytic intermediate dihydroxyacetone phosphate (DHAP) to sn-glycerol 3-phosphate (G3P). Shows a 15-fold preference for NADPH over NADH in the reduction process. Can also catalyze the reverse reaction in vitro. Shows no activity with dihydroxyacetone, glycerol, glycerol-2-phosphate, D-glyceraldehyde-3-phosphate, DL-glyceraldehyde, D-erythrose-4-phosphate, D-fructose-6-phosphate, beta-D-glucose-6-phosphate, or alpha-D-galactose-1-phosphate. The protein is NADP(+)-dependent glycerol-3-phosphate dehydrogenase of Archaeoglobus fulgidus (strain ATCC 49558 / DSM 4304 / JCM 9628 / NBRC 100126 / VC-16).